The following is a 211-amino-acid chain: MDRLASTSALNLARSLYEAGIRDEPVLKAVANTPRERFLDAALGHKAYENTALPIGQGQTISQPYIVARMTEILLQCQPQKVLEIGTGSGYQAAILAQLVPQLCTVERIKSLQIQARQRLKKLDLHNIAFKYGDGWQGWPSKGPYDAIMVTAAAASVPNALTEQLTDGGVLVIPVGEASQQLLKVTRKGNQYVSEAIEIVRFVPLINGELA.

Ser-62 is an active-site residue.

Belongs to the methyltransferase superfamily. L-isoaspartyl/D-aspartyl protein methyltransferase family.

The protein localises to the cytoplasm. The catalysed reaction is [protein]-L-isoaspartate + S-adenosyl-L-methionine = [protein]-L-isoaspartate alpha-methyl ester + S-adenosyl-L-homocysteine. Catalyzes the methyl esterification of L-isoaspartyl residues in peptides and proteins that result from spontaneous decomposition of normal L-aspartyl and L-asparaginyl residues. It plays a role in the repair and/or degradation of damaged proteins. This Shewanella piezotolerans (strain WP3 / JCM 13877) protein is Protein-L-isoaspartate O-methyltransferase.